The sequence spans 214 residues: MIVKQTEFIKSATKPAHYPEGNLPEIAFAGRSNVGKSSLVNVLVNRKNLVRTSSTPGRTQLINFFQVNDDFMLVDLPGYGYAKVPLAVKKEWRPMMETYLSKRRNLRGVVLILDIRRTPTEEDLQMLAWLRAFSVPPIVVITKCDKVSKNERARQSAVIMEKMQLKKEELNYFSALSKEGKDAVWARIDALLSPAAAETTEISGDPAPSAPVND.

In terms of domain architecture, EngB-type G spans 22–194 (NLPEIAFAGR…WARIDALLSP (173 aa)). Residues 30-37 (GRSNVGKS), 57-61 (GRTQL), 75-78 (DLPG), 142-145 (TKCD), and 173-175 (FSA) contribute to the GTP site. 2 residues coordinate Mg(2+): Ser37 and Thr59.

It belongs to the TRAFAC class TrmE-Era-EngA-EngB-Septin-like GTPase superfamily. EngB GTPase family. Mg(2+) is required as a cofactor.

In terms of biological role, necessary for normal cell division and for the maintenance of normal septation. This Citrifermentans bemidjiense (strain ATCC BAA-1014 / DSM 16622 / JCM 12645 / Bem) (Geobacter bemidjiensis) protein is Probable GTP-binding protein EngB.